A 289-amino-acid chain; its full sequence is Ketose 3-epimerase (289 aa).

Residue E146 is the Proton donor/acceptor of the active site. Residue E146 participates in Mn(2+) binding. Substrate contacts are provided by residues E152 and D179–H182. Mn(2+)-binding residues include D179 and H205. R211 serves as a coordination point for substrate. E240 serves as the catalytic Proton donor/acceptor. Mn(2+) is bound at residue E240.

It belongs to the hyi family. In terms of assembly, homotetramer. Requires Mg(2+) as cofactor. The cofactor is Mn(2+). Co(2+) is required as a cofactor.

It catalyses the reaction L-ribulose = L-xylulose. The enzyme catalyses D-allulose = keto-D-fructose. It carries out the reaction keto-L-tagatose = keto-L-sorbose. The catalysed reaction is D-ribulose = D-xylulose. It catalyses the reaction L-allulose = keto-L-fructose. The enzyme catalyses keto-D-tagatose = keto-D-sorbose. Its function is as follows. Catalyzes the reversible C-3 epimerization of several ketoses. Shows the highest enzymatic activity for the epimerization of L-ribulose to L-xylulose. Is also able to convert D-allulose (also known as D-psicose) to D-fructose and, to a lesser extent, L-tagatose to L-sorbose, D-ribulose to D-xylulose, L-allulose to L-fructose and D-tagatose to D-sorbose. In Arthrobacter globiformis, this protein is Ketose 3-epimerase.